Reading from the N-terminus, the 522-residue chain is Transmembrane protein 213R (522 aa).

A run of 2 helical transmembrane segments spans residues 33–50 and 55–72; these read NTITRLILIASLVLLLFG and SLYILIIGLIIVIVIYSQ.

Belongs to the IIV-6 213R family.

Its subcellular location is the membrane. This Invertebrate iridescent virus 6 (IIV-6) protein is Transmembrane protein 213R.